We begin with the raw amino-acid sequence, 672 residues long: Glycine--tRNA ligase beta subunit (672 aa).

This sequence belongs to the class-II aminoacyl-tRNA synthetase family. As to quaternary structure, tetramer of two alpha and two beta subunits.

It localises to the cytoplasm. It catalyses the reaction tRNA(Gly) + glycine + ATP = glycyl-tRNA(Gly) + AMP + diphosphate. This Thermotoga sp. (strain RQ2) protein is Glycine--tRNA ligase beta subunit.